The chain runs to 455 residues: Probable hexose phosphate transport protein (455 aa).

The next 5 helical transmembrane spans lie at 34-54 (IFYS…SFTF), 70-90 (LGII…VSGV), 113-133 (IFFG…LNGW), 161-181 (VWST…GFII), and 185-205 (GWRG…LVLI). Residues 219 to 242 (PIEKYKRDPHHAHHEGKSASEGTE) are disordered. The next 6 helical transmembrane spans lie at 257–277 (YVLT…IYIV), 302–322 (FCVS…GWLS), 331–351 (GPMN…MWFS), 363–383 (LLFV…LAAA), 394–414 (ASGF…YPLG), and 424–444 (GFFI…LPTW).

It belongs to the major facilitator superfamily. Organophosphate:Pi antiporter (OPA) (TC 2.A.1.4) family.

Its subcellular location is the cell membrane. Its function is as follows. Transport protein for sugar phosphate uptake. The protein is Probable hexose phosphate transport protein (uhpC) of Chlamydia pneumoniae (Chlamydophila pneumoniae).